The sequence spans 247 residues: Adenosylcobinamide-GDP ribazoletransferase (247 aa).

5 helical membrane-spanning segments follow: residues 34-54, 59-79, 113-133, 138-158, and 194-214; these read IVMF…IFIL, CGIP…TGGF, GGLA…ELAL, VLAA…LLMY, and VLLP…AIFI.

This sequence belongs to the CobS family. Mg(2+) is required as a cofactor.

The protein localises to the cell inner membrane. The catalysed reaction is alpha-ribazole + adenosylcob(III)inamide-GDP = adenosylcob(III)alamin + GMP + H(+). It carries out the reaction alpha-ribazole 5'-phosphate + adenosylcob(III)inamide-GDP = adenosylcob(III)alamin 5'-phosphate + GMP + H(+). The protein operates within cofactor biosynthesis; adenosylcobalamin biosynthesis; adenosylcobalamin from cob(II)yrinate a,c-diamide: step 7/7. In terms of biological role, joins adenosylcobinamide-GDP and alpha-ribazole to generate adenosylcobalamin (Ado-cobalamin). Also synthesizes adenosylcobalamin 5'-phosphate from adenosylcobinamide-GDP and alpha-ribazole 5'-phosphate. The polypeptide is Adenosylcobinamide-GDP ribazoletransferase (Salmonella arizonae (strain ATCC BAA-731 / CDC346-86 / RSK2980)).